Here is a 469-residue protein sequence, read N- to C-terminus: Glutamate--tRNA ligase 1 (469 aa).

The 'HIGH' region signature appears at 10-20 (PSPTGYLHVGG). Positions 252–256 (KLSKR) match the 'KMSKS' region motif. Residue Lys255 coordinates ATP.

It belongs to the class-I aminoacyl-tRNA synthetase family. Glutamate--tRNA ligase type 1 subfamily. As to quaternary structure, monomer.

Its subcellular location is the cytoplasm. The catalysed reaction is tRNA(Glu) + L-glutamate + ATP = L-glutamyl-tRNA(Glu) + AMP + diphosphate. In terms of biological role, catalyzes the attachment of glutamate to tRNA(Glu) in a two-step reaction: glutamate is first activated by ATP to form Glu-AMP and then transferred to the acceptor end of tRNA(Glu). The protein is Glutamate--tRNA ligase 1 of Fervidobacterium nodosum (strain ATCC 35602 / DSM 5306 / Rt17-B1).